The primary structure comprises 661 residues: MGKSEKRVATHGVRCFAKIKMFLLALTCAYVSKSLSGTYMNSMLTQIERQFGIPTSIVGLINGSFEIGNLLLIIFVSYFGTKLHRPIMIGVGCAVMGLGCFLISLPHFLMGQYEYETILPTSNVSSNSFFCVENRSQTLNPTQDPSECVKEMKSLMWIYVLVGNIIRGIGETPIMPLGISYIEDFAKSENSPLYIGILETGMTIGPLIGLLLASSCANIYVDIESVNTDDLTITPTDTRWVGAWWIGFLVCAGVNILTSFPFFFFPKTLPKEGLQENVDGTENAKEKKHRKKAKEEKRGITKDFFVFMKSLSCNPIYMLFILISVLQFNAFINSFTFMPKYLEQQYGKSTAEVVFLMGLYMLPPICLGYLIGGLIMKKFKVTVKKAAHLAFWLCLSEYLLSFLSYVMTCDNFPVAGLTTSYEGVQHQLYVENKVLADCNTRCNCSTNTWDPVCGDNGLAYMSACLAGCEKSVGTGTNMVFQNCSCIQSSGNSSAVLGLCNKGPDCANKLQYFLIIAIFGCFIYSLAGIPGYMVLLRCIKSEEKSLGVGLHAFCIRILAGIPAPIYFGALIDRTCLHWGTLKCGEPGACRMYDINSFRRLYLGLPAALRGASFVPAFFILRLTRTFQFPGDIESSKTDHAEMKLTLKESECTEVLRSKVTED.

Over 1–20 the chain is Cytoplasmic; that stretch reads MGKSEKRVATHGVRCFAKIK. A helical transmembrane segment spans residues 21–40; it reads MFLLALTCAYVSKSLSGTYM. Topologically, residues 41 to 59 are extracellular; it reads NSMLTQIERQFGIPTSIVG. The chain crosses the membrane as a helical span at residues 60-80; it reads LINGSFEIGNLLLIIFVSYFG. Over 81–86 the chain is Cytoplasmic; that stretch reads TKLHRP. Residues 87–111 form a helical membrane-spanning segment; sequence IMIGVGCAVMGLGCFLISLPHFLMG. At 112–154 the chain is on the extracellular side; sequence QYEYETILPTSNVSSNSFFCVENRSQTLNPTQDPSECVKEMKS. Asn-123 and Asn-134 each carry an N-linked (GlcNAc...) asparagine glycan. Residues 155-183 traverse the membrane as a helical segment; the sequence is LMWIYVLVGNIIRGIGETPIMPLGISYIE. The Cytoplasmic segment spans residues 184–202; the sequence is DFAKSENSPLYIGILETGM. A helical membrane pass occupies residues 203 to 223; that stretch reads TIGPLIGLLLASSCANIYVDI. Residues 224–241 lie on the Extracellular side of the membrane; sequence ESVNTDDLTITPTDTRWV. A helical transmembrane segment spans residues 242–266; it reads GAWWIGFLVCAGVNILTSFPFFFFP. The Cytoplasmic portion of the chain corresponds to 267 to 310; the sequence is KTLPKEGLQENVDGTENAKEKKHRKKAKEEKRGITKDFFVFMKS. Residues 311-332 traverse the membrane as a helical segment; it reads LSCNPIYMLFILISVLQFNAFI. Over 333 to 352 the chain is Extracellular; sequence NSFTFMPKYLEQQYGKSTAE. A helical transmembrane segment spans residues 353–376; sequence VVFLMGLYMLPPICLGYLIGGLIM. Over 377–380 the chain is Cytoplasmic; that stretch reads KKFK. A helical transmembrane segment spans residues 381–404; sequence VTVKKAAHLAFWLCLSEYLLSFLS. At 405-512 the chain is on the extracellular side; it reads YVMTCDNFPV…PDCANKLQYF (108 aa). Positions 432–487 constitute a Kazal-like domain; sequence NKVLADCNTRCNCSTNTWDPVCGDNGLAYMSACLAGCEKSVGTGTNMVFQNCSCIQ. Cystine bridges form between Cys-438–Cys-468, Cys-444–Cys-464, and Cys-453–Cys-485. The N-linked (GlcNAc...) asparagine glycan is linked to Asn-443. Asn-482 and Asn-491 each carry an N-linked (GlcNAc...) asparagine glycan. Residues 513–535 form a helical membrane-spanning segment; the sequence is LIIAIFGCFIYSLAGIPGYMVLL. At 536-544 the chain is on the cytoplasmic side; that stretch reads RCIKSEEKS. The chain crosses the membrane as a helical span at residues 545–570; sequence LGVGLHAFCIRILAGIPAPIYFGALI. Residues 571 to 604 lie on the Extracellular side of the membrane; the sequence is DRTCLHWGTLKCGEPGACRMYDINSFRRLYLGLP. Residues 605 to 622 traverse the membrane as a helical segment; it reads AALRGASFVPAFFILRLT. Over 623–661 the chain is Cytoplasmic; the sequence is RTFQFPGDIESSKTDHAEMKLTLKESECTEVLRSKVTED. Ser-633 and Ser-634 each carry phosphoserine.

This sequence belongs to the organo anion transporter (TC 2.A.60) family. As to expression, highly expressed in brain, liver, and kidney but not expressed in heart, spleen, lung, skeletal muscle, and testis.

The protein localises to the cell membrane. The catalysed reaction is estrone 3-sulfate(out) = estrone 3-sulfate(in). It carries out the reaction taurocholate(out) = taurocholate(in). The enzyme catalyses prostaglandin E2(out) = prostaglandin E2(in). It catalyses the reaction L-thyroxine(out) = L-thyroxine(in). Functionally, mediates the Na(+)-independent transport of organic anions such as taurocholate, cholate, 17-beta-glucuronosyl estradiol, prostaglandin E2, estrone 3-sulfate, L-thyroxine (T4), the cardiac glycosides ouabain and digoxin and thyroid hormones. May play an especially important role in the brain accumulation and toxicity of digoxin and in the hepatobiliary and renal excretion of cardiac glycosides. Shows a pH-sensitive substrate specificity which may be ascribed to the protonation state of the binding site and leads to a stimulation of substrate transport in an acidic microenvironment. Hydrogencarbonate/HCO3(-) acts as the probable counteranion that exchanges for organic anions. This is Solute carrier organic anion transporter family member 1A4 (Slco1a4) from Rattus norvegicus (Rat).